The chain runs to 513 residues: Beta-glucosidase 5 (513 aa).

An N-terminal signal peptide occupies residues Met1–Gly26. A beta-D-glucoside is bound at residue Gln46. Glu192 (proton donor) is an active-site residue. Residues Cys211 and Cys220 are joined by a disulfide bond. N-linked (GlcNAc...) asparagine glycans are attached at residues Asn224 and Asn273. Positions 336 and 405 each coordinate a beta-D-glucoside. The active-site Nucleophile is Glu405. A glycan (N-linked (GlcNAc...) asparagine) is linked at Asn412. Residues Trp447, Glu454 to Tyr455, and Tyr463 contribute to the a beta-D-glucoside site.

Belongs to the glycosyl hydrolase 1 family.

It catalyses the reaction Hydrolysis of terminal, non-reducing beta-D-glucosyl residues with release of beta-D-glucose.. The chain is Beta-glucosidase 5 (BGLU5) from Oryza sativa subsp. japonica (Rice).